We begin with the raw amino-acid sequence, 215 residues long: Probable transaldolase (215 aa).

The Schiff-base intermediate with substrate role is filled by K83.

This sequence belongs to the transaldolase family. Type 3B subfamily.

It localises to the cytoplasm. It catalyses the reaction D-sedoheptulose 7-phosphate + D-glyceraldehyde 3-phosphate = D-erythrose 4-phosphate + beta-D-fructose 6-phosphate. The protein operates within carbohydrate degradation; pentose phosphate pathway; D-glyceraldehyde 3-phosphate and beta-D-fructose 6-phosphate from D-ribose 5-phosphate and D-xylulose 5-phosphate (non-oxidative stage): step 2/3. Its function is as follows. Transaldolase is important for the balance of metabolites in the pentose-phosphate pathway. The protein is Probable transaldolase of Clostridium kluyveri (strain NBRC 12016).